Consider the following 399-residue polypeptide: Accessory Sec system protein translocase subunit SecY2 (399 aa).

Transmembrane regions (helical) follow at residues 14 to 34 (IFFT…SIVS), 60 to 80 (LNIF…LTLI), 102 to 122 (ALTL…YINK), 128 to 148 (SNML…VWLA), 152 to 172 (TTYG…KSIF), 183 to 203 (ASLI…LFFI), 237 to 257 (ISIM…NFIG), 272 to 292 (FTNP…GYFL), 335 to 355 (WFGS…ALLV), and 362 to 382 (VYFT…AETI).

Belongs to the SecY/SEC61-alpha family. SecY2 subfamily. In terms of assembly, component of the accessory SecA2/SecY2 protein translocase complex required to export cell wall proteins. May form heterotrimers with SecE and SecG subunits.

It is found in the cell membrane. Part of the accessory SecA2/SecY2 system specifically required for export of possible cell wall proteins. The central subunit of a protein translocation channel. The polypeptide is Accessory Sec system protein translocase subunit SecY2 (Staphylococcus epidermidis (strain ATCC 12228 / FDA PCI 1200)).